Here is a 146-residue protein sequence, read N- to C-terminus: Large ribosomal subunit protein uL23B (146 aa).

The segment at 1 to 22 (MAPSSNKVGKAIQAKKAVVKGS) is disordered.

This sequence belongs to the universal ribosomal protein uL23 family.

Its function is as follows. This protein binds to a specific region on the 26S rRNA. In Caenorhabditis elegans, this protein is Large ribosomal subunit protein uL23B (rpl-23A.2).